We begin with the raw amino-acid sequence, 124 residues long: UPF0292 protein AF_0905 (124 aa).

One can recognise a Toprim domain in the interval 21–98 (GWVVVVEGKK…IPDVEIKRKI (78 aa)). Glu27, Asp67, and Asp69 together coordinate Mg(2+).

Belongs to the UPF0292 family. Mg(2+) is required as a cofactor.

In Archaeoglobus fulgidus (strain ATCC 49558 / DSM 4304 / JCM 9628 / NBRC 100126 / VC-16), this protein is UPF0292 protein AF_0905.